A 48-amino-acid chain; its full sequence is Entericidin B (48 aa).

The N-terminal stretch at M1–A21 is a signal peptide. The N-palmitoyl cysteine moiety is linked to residue C22. Residue C22 is the site of S-diacylglycerol cysteine attachment.

Belongs to the EcnA/EcnB lipoprotein family.

The protein resides in the cell membrane. Its function is as follows. Plays a role in the bacteriolysis. Is activated under conditions of high osmolarity by the factor sigma S. Entericidin A functions as an antidote. The chain is Entericidin B (ecnB) from Escherichia coli O157:H7.